We begin with the raw amino-acid sequence, 283 residues long: 2-dehydro-3-deoxyphosphooctonate aldolase (283 aa).

This sequence belongs to the KdsA family.

The protein resides in the cytoplasm. The enzyme catalyses D-arabinose 5-phosphate + phosphoenolpyruvate + H2O = 3-deoxy-alpha-D-manno-2-octulosonate-8-phosphate + phosphate. Its pathway is carbohydrate biosynthesis; 3-deoxy-D-manno-octulosonate biosynthesis; 3-deoxy-D-manno-octulosonate from D-ribulose 5-phosphate: step 2/3. It functions in the pathway bacterial outer membrane biogenesis; lipopolysaccharide biosynthesis. The chain is 2-dehydro-3-deoxyphosphooctonate aldolase from Synechococcus sp. (strain WH7803).